The chain runs to 415 residues: Procollagen C-endopeptidase enhancer 2 (415 aa).

The N-terminal stretch at 1 to 23 (MRGANAWAPLCLLLAAATQLSRQ) is a signal peptide. 7 disulfides stabilise this stretch: Cys33–Cys59, Cys86–Cys107, Cys154–Cys181, Cys208–Cys231, Cys297–Cys364, Cys301–Cys367, and Cys312–Cys415. CUB domains lie at 33–144 (CGGI…FSAA) and 154–268 (CGGL…YIFR). The NTR domain maps to 297 to 415 (CQQKCRRTGT…LLDALKNKQC (119 aa)). Asn355 carries N-linked (GlcNAc...) asparagine glycosylation.

In terms of assembly, interacts with heparin with high affinity, and type I or II collagen. O-glycosylated; contains sialic acid. As to expression, highly expressed in the heart, trabecular meshwork, pituitary gland, bladder, mammary gland, trachea and placenta and weakly expressed in the brain. Expressed in cartilage.

The protein localises to the secreted. Functionally, binds to the C-terminal propeptide of types I and II procollagens and may enhance the cleavage of that propeptide by BMP1. The chain is Procollagen C-endopeptidase enhancer 2 (PCOLCE2) from Homo sapiens (Human).